A 93-amino-acid polypeptide reads, in one-letter code: Phosphoribosyl-ATP pyrophosphatase (93 aa).

The protein belongs to the PRA-PH family.

The protein localises to the cytoplasm. The catalysed reaction is 1-(5-phospho-beta-D-ribosyl)-ATP + H2O = 1-(5-phospho-beta-D-ribosyl)-5'-AMP + diphosphate + H(+). It participates in amino-acid biosynthesis; L-histidine biosynthesis; L-histidine from 5-phospho-alpha-D-ribose 1-diphosphate: step 2/9. The protein is Phosphoribosyl-ATP pyrophosphatase of Corynebacterium aurimucosum (strain ATCC 700975 / DSM 44827 / CIP 107346 / CN-1) (Corynebacterium nigricans).